Here is a 215-residue protein sequence, read N- to C-terminus: Thiamine import ATP-binding protein ThiQ (215 aa).

Residues 2-215 (IYLNNVILND…GQISQLQKGV (214 aa)) form the ABC transporter domain. Position 32 to 39 (32 to 39 (GESGAGKS)) interacts with ATP.

It belongs to the ABC transporter superfamily. Thiamine importer (TC 3.A.1.19.1) family. The complex is composed of two ATP-binding proteins (ThiQ), two transmembrane proteins (ThiP) and a solute-binding protein (ThiB).

The protein localises to the cell inner membrane. It catalyses the reaction thiamine(out) + ATP + H2O = thiamine(in) + ADP + phosphate + H(+). Its function is as follows. Part of the ABC transporter complex ThiBPQ involved in thiamine import. Responsible for energy coupling to the transport system. The polypeptide is Thiamine import ATP-binding protein ThiQ (Haemophilus influenzae (strain ATCC 51907 / DSM 11121 / KW20 / Rd)).